The primary structure comprises 456 residues: Cysteine--tRNA ligase (456 aa).

Cysteine 30 provides a ligand contact to Zn(2+). A 'HIGH' region motif is present at residues 32-42 (MTVYDFCHIGH). The Zn(2+) site is built by cysteine 211, histidine 236, and glutamate 240. The 'KMSKS' region signature appears at 268-272 (KMSKS). Lysine 271 is an ATP binding site.

This sequence belongs to the class-I aminoacyl-tRNA synthetase family. As to quaternary structure, monomer. Requires Zn(2+) as cofactor.

Its subcellular location is the cytoplasm. It carries out the reaction tRNA(Cys) + L-cysteine + ATP = L-cysteinyl-tRNA(Cys) + AMP + diphosphate. This Dichelobacter nodosus (strain VCS1703A) protein is Cysteine--tRNA ligase.